The primary structure comprises 90 residues: Essential MCU regulator, mitochondrial (90 aa).

Residues 49–68 (GVLKLIFVSASSLYIGGLIA) traverse the membrane as a helical segment.

The protein belongs to the SMDT1/EMRE family.

The protein localises to the mitochondrion inner membrane. Essential regulatory subunit of the mitochondrial calcium uniporter (mcu-1) channel, a protein that mediates calcium uptake into mitochondria. This Caenorhabditis elegans protein is Essential MCU regulator, mitochondrial.